A 296-amino-acid chain; its full sequence is Phosphoribosylaminoimidazole-succinocarboxamide synthase (296 aa).

It belongs to the SAICAR synthetase family.

It carries out the reaction 5-amino-1-(5-phospho-D-ribosyl)imidazole-4-carboxylate + L-aspartate + ATP = (2S)-2-[5-amino-1-(5-phospho-beta-D-ribosyl)imidazole-4-carboxamido]succinate + ADP + phosphate + 2 H(+). It participates in purine metabolism; IMP biosynthesis via de novo pathway; 5-amino-1-(5-phospho-D-ribosyl)imidazole-4-carboxamide from 5-amino-1-(5-phospho-D-ribosyl)imidazole-4-carboxylate: step 1/2. In Trichlorobacter lovleyi (strain ATCC BAA-1151 / DSM 17278 / SZ) (Geobacter lovleyi), this protein is Phosphoribosylaminoimidazole-succinocarboxamide synthase.